The sequence spans 205 residues: Phosphoribosyl-dephospho-CoA transferase (205 aa).

Active-site residues include D134 and D136.

Belongs to the MdcG family.

It catalyses the reaction apo-[malonate decarboxylase ACP] + 2'-(5''-triphospho-alpha-D-ribosyl)-3'-dephospho-CoA = holo-[malonate decarboxylase ACP] + diphosphate. In terms of biological role, transfers 2'-(5-triphosphoribosyl)-3'-dephosphocoenzyme-A to the apo-[acyl-carrier-protein] of the malonate decarboxylase to yield holo-[acyl-carrier-protein]. The sequence is that of Phosphoribosyl-dephospho-CoA transferase from Klebsiella pneumoniae subsp. pneumoniae (strain ATCC 700721 / MGH 78578).